Here is a 556-residue protein sequence, read N- to C-terminus: Glutamine--tRNA ligase (556 aa).

A 'HIGH' region motif is present at residues 34-44 (PEPNGFLHIGH). Residues 35 to 37 (EPN) and 41 to 47 (HIGHAKA) each bind ATP. L-glutamine-binding residues include Asp67 and Tyr212. ATP-binding positions include Thr231, 261-262 (RL), and 269-271 (MSK). The 'KMSKS' region signature appears at 268 to 272 (LMSKR).

It belongs to the class-I aminoacyl-tRNA synthetase family. In terms of assembly, monomer.

It localises to the cytoplasm. It catalyses the reaction tRNA(Gln) + L-glutamine + ATP = L-glutaminyl-tRNA(Gln) + AMP + diphosphate. The polypeptide is Glutamine--tRNA ligase (Colwellia psychrerythraea (strain 34H / ATCC BAA-681) (Vibrio psychroerythus)).